The primary structure comprises 192 residues: uncharacterized protein (192 aa).

Residues 53–111 are a coiled coil; the sequence is CLKESVERARKVYLSLLKDYERKSREYEKAYENYLKELRTYRETLYRIKEDLKFYERIC.

This is an uncharacterized protein from Aquifex aeolicus (strain VF5).